Reading from the N-terminus, the 256-residue chain is MNRIEQQFKKSPAYVAYLTAGDGGLERSLESLLALAKGGVNILEVGVPFSDPVADGPVIQEASIRALAQGTTLHDVLTLITSFRQHSEIPIILFTYFNPLLAAGDKIYQQMKSAGVDGCLVVDLPVEEAAPHLTACKTAKIAPILLISPSTTQERLKKINEHGEGMLYYVCRPGTTGVRATLPENFPAKMNQIKSMTSLPIVTGFGIANRKMAAQALQYADGFVIGSLFVKAIAEGISKNALTRLAQSLNPHYPNP.

Active-site proton acceptor residues include Glu-44 and Asp-55.

The protein belongs to the TrpA family. As to quaternary structure, tetramer of two alpha and two beta chains.

It catalyses the reaction (1S,2R)-1-C-(indol-3-yl)glycerol 3-phosphate + L-serine = D-glyceraldehyde 3-phosphate + L-tryptophan + H2O. It functions in the pathway amino-acid biosynthesis; L-tryptophan biosynthesis; L-tryptophan from chorismate: step 5/5. The alpha subunit is responsible for the aldol cleavage of indoleglycerol phosphate to indole and glyceraldehyde 3-phosphate. The protein is Tryptophan synthase alpha chain of Coxiella burnetii (strain CbuK_Q154) (Coxiella burnetii (strain Q154)).